A 441-amino-acid polypeptide reads, in one-letter code: Proline--tRNA ligase (441 aa).

Belongs to the class-II aminoacyl-tRNA synthetase family. ProS type 2 subfamily. In terms of assembly, homodimer.

Its subcellular location is the cytoplasm. It catalyses the reaction tRNA(Pro) + L-proline + ATP = L-prolyl-tRNA(Pro) + AMP + diphosphate. Catalyzes the attachment of proline to tRNA(Pro) in a two-step reaction: proline is first activated by ATP to form Pro-AMP and then transferred to the acceptor end of tRNA(Pro). The protein is Proline--tRNA ligase of Bartonella quintana (strain Toulouse) (Rochalimaea quintana).